We begin with the raw amino-acid sequence, 85 residues long: Large ribosomal subunit protein bL31B (85 aa).

The protein belongs to the bacterial ribosomal protein bL31 family. Type B subfamily. As to quaternary structure, part of the 50S ribosomal subunit.

The chain is Large ribosomal subunit protein bL31B from Clavibacter michiganensis subsp. michiganensis (strain NCPPB 382).